A 349-amino-acid chain; its full sequence is Alpha-centractin (349 aa).

M1 carries the N-acetylmethionine modification.

It belongs to the actin family. ARP1 subfamily. Part of the ACTR1A/ACTB filament around which the dynactin complex is built. The filament contains 8 copies of ACTR1A and 1 ACTB. Interacts with dynein and adapters such as BICD2. Interacts with BCCIP (isoform 2/alpha).

It is found in the cytoplasm. It localises to the cytoskeleton. The protein resides in the microtubule organizing center. Its subcellular location is the centrosome. The protein localises to the cell cortex. Functionally, part of the ACTR1A/ACTB filament around which the dynactin complex is built. The dynactin multiprotein complex activates the molecular motor dynein for ultra-processive transport along microtubules. This is Alpha-centractin (ACTR1A) from Sus scrofa (Pig).